Reading from the N-terminus, the 322-residue chain is Ras association domain-containing protein 4 (322 aa).

Positions 96–161 (EASPQDSKVP…SKSRAPSEAQ (66 aa)) are disordered. Position 142 is a phosphoserine (S142). Residues 175–264 (YNHKTSVFTP…KIFLMEADLS (90 aa)) enclose the Ras-associating domain. Residues 271–318 (VAQYIKFEMPVLDSFVEKLKEEEEREIIKLTMKFQALRLTMLQRLEQL) enclose the SARAH domain.

As to quaternary structure, interacts directly with activated KRAS in a GTP-dependent manner.

Potential tumor suppressor. May act as a KRAS effector protein. May promote apoptosis and cell cycle arrest. This chain is Ras association domain-containing protein 4 (Rassf4), found in Mus musculus (Mouse).